The following is a 117-amino-acid chain: Large ribosomal subunit protein uL18 (117 aa).

It belongs to the universal ribosomal protein uL18 family. As to quaternary structure, part of the 50S ribosomal subunit; part of the 5S rRNA/L5/L18/L25 subcomplex. Contacts the 5S and 23S rRNAs.

In terms of biological role, this is one of the proteins that bind and probably mediate the attachment of the 5S RNA into the large ribosomal subunit, where it forms part of the central protuberance. The chain is Large ribosomal subunit protein uL18 from Klebsiella pneumoniae subsp. pneumoniae (strain ATCC 700721 / MGH 78578).